The following is a 196-amino-acid chain: MLERIKVCFTESIQTQIAAAEALPDAISRAAMTLVHSLLNGNKILCCGNGTSAANAQHFAASMINRFETERPSLPAIALNTDNVVLTAIANDRLHDEVYAKQVRALGHAGDVLLAISTRGNSRDIVKAVEAAVTRDMTIVALTGYDGGELAGLLGPQDVEIRIPSHHSARIQEMHMLTVNCLCDLIDNTLFPHQDD.

In terms of domain architecture, SIS spans 34 to 196 (LVHSLLNGNK…DNTLFPHQDD (163 aa)).

The protein belongs to the SIS family. DiaA subfamily. Homotetramer; dimer of dimers.

Required for the timely initiation of chromosomal replication via direct interactions with the DnaA initiator protein. The sequence is that of DnaA initiator-associating protein DiaA from Salmonella enteritidis PT4 (strain P125109).